We begin with the raw amino-acid sequence, 117 residues long: Large ribosomal subunit protein bL20c (117 aa).

This sequence belongs to the bacterial ribosomal protein bL20 family.

The protein localises to the plastid. It localises to the chloroplast. Functionally, binds directly to 23S ribosomal RNA and is necessary for the in vitro assembly process of the 50S ribosomal subunit. It is not involved in the protein synthesizing functions of that subunit. In Vitis vinifera (Grape), this protein is Large ribosomal subunit protein bL20c.